Here is a 104-residue protein sequence, read N- to C-terminus: Replication restart protein PriB (104 aa).

Positions 1–101 (MTNRLALSGT…LHAEQIELID (101 aa)) constitute an SSB domain.

The protein belongs to the PriB family. In terms of assembly, homodimer. Interacts with PriA and DnaT. Component of the replication restart primosome. Primosome assembly occurs via a 'hand-off' mechanism. PriA binds to replication forks, subsequently PriB then DnaT bind; DnaT then displaces ssDNA to generate the helicase loading substrate.

Involved in the restart of stalled replication forks, which reloads the replicative helicase on sites other than the origin of replication; the PriA-PriB pathway is the major replication restart pathway. During primosome assembly it facilitates complex formation between PriA and DnaT on DNA; stabilizes PriA on DNA. Stimulates the DNA unwinding activity of PriA helicase. The polypeptide is Replication restart protein PriB (Salmonella agona (strain SL483)).